Consider the following 685-residue polypeptide: DNA ligase (685 aa).

Residues 34-38 (DAVFD), 83-84 (SL), and E113 contribute to the NAD(+) site. K115 functions as the N6-AMP-lysine intermediate in the catalytic mechanism. R136, E173, K297, and K321 together coordinate NAD(+). Positions 415, 418, 433, and 438 each coordinate Zn(2+). The region spanning 607 to 685 (QEKLQFSGKT…EQELMTLISN (79 aa)) is the BRCT domain.

Belongs to the NAD-dependent DNA ligase family. LigA subfamily. Mg(2+) is required as a cofactor. Requires Mn(2+) as cofactor.

It catalyses the reaction NAD(+) + (deoxyribonucleotide)n-3'-hydroxyl + 5'-phospho-(deoxyribonucleotide)m = (deoxyribonucleotide)n+m + AMP + beta-nicotinamide D-nucleotide.. Functionally, DNA ligase that catalyzes the formation of phosphodiester linkages between 5'-phosphoryl and 3'-hydroxyl groups in double-stranded DNA using NAD as a coenzyme and as the energy source for the reaction. It is essential for DNA replication and repair of damaged DNA. The sequence is that of DNA ligase from Prochlorococcus marinus (strain SARG / CCMP1375 / SS120).